The chain runs to 181 residues: Protein Syd (181 aa).

It belongs to the Syd family.

It localises to the cell inner membrane. Functionally, interacts with the SecY protein in vivo. May bind preferentially to an uncomplexed state of SecY, thus functioning either as a chelating agent for excess SecY in the cell or as a regulatory factor that negatively controls the translocase function. The polypeptide is Protein Syd (Shigella dysenteriae serotype 1 (strain Sd197)).